Here is a 498-residue protein sequence, read N- to C-terminus: Early growth response protein 1 (498 aa).

Disordered regions lie at residues 137 to 203 and 287 to 308; these read NASP…TASI and PSRMRKYPNRPSKTPPHERPYA. Over residues 139 to 163 the composition is skewed to low complexity; that stretch reads SPSSAPSSSPSSSSSSSQSPPLSCS. Polar residues predominate over residues 179–202; that stretch reads FPNSSPELFPDQSPQPFQNASTAS. C2H2-type zinc fingers lie at residues 307-331, 337-359, and 365-387; these read YACPVESCDRRFSRSDELTRHIRIH, FQCRICMRNFSRSDHLTTHIRTH, and FACDICGRKFARSDERKRHTKIH. The interval 378–422 is disordered; it reads DERKRHTKIHLRQKDKKADKATPVSVASPVSSYSPSASTSYPSPV. Residues 382 to 392 show a composition bias toward basic residues; it reads RHTKIHLRQKD. Low complexity predominate over residues 398–422; the sequence is ATPVSVASPVSSYSPSASTSYPSPV.

It belongs to the EGR C2H2-type zinc-finger protein family.

Its subcellular location is the nucleus. The protein localises to the cytoplasm. Its function is as follows. Transcriptional regulator. Recognizes and binds to the DNA sequence 5'-GCG(T/G)GGGCG-3'(EGR-site) in the promoter region of target genes. Binds double-stranded target DNA, irrespective of the cytosine methylation status. Regulates the transcription of numerous target genes, and thereby plays an important role in regulating the response to growth factors, DNA damage, and ischemia. Plays a role in the regulation of cell survival, proliferation and cell death. Mediates responses to ischemia and hypoxia; regulates the expression of proteins that are involved in inflammatory processes. Plays a role in regulating the expression of circadian clock genes. The polypeptide is Early growth response protein 1 (Xenopus tropicalis (Western clawed frog)).